A 98-amino-acid polypeptide reads, in one-letter code: Small ribosomal subunit protein uS17B (98 aa).

This sequence belongs to the universal ribosomal protein uS17 family. Part of the 30S ribosomal subunit.

Its function is as follows. One of the primary rRNA binding proteins, it binds specifically to the 5'-end of 16S ribosomal RNA. The sequence is that of Small ribosomal subunit protein uS17B from Bacteroides thetaiotaomicron (strain ATCC 29148 / DSM 2079 / JCM 5827 / CCUG 10774 / NCTC 10582 / VPI-5482 / E50).